Reading from the N-terminus, the 438-residue chain is Ribosomal protein uS12 methylthiotransferase RimO (438 aa).

Positions 6–118 (KQLCLISLGC…IDILIAKKQN (113 aa)) constitute an MTTase N-terminal domain. Residues Cys15, Cys49, Cys81, Cys150, Cys154, and Cys157 each coordinate [4Fe-4S] cluster. One can recognise a Radical SAM core domain in the interval 136–364 (TGSSVHAYVK…NKIALKHQHN (229 aa)).

Belongs to the methylthiotransferase family. RimO subfamily. [4Fe-4S] cluster is required as a cofactor.

It localises to the cytoplasm. It catalyses the reaction L-aspartate(89)-[ribosomal protein uS12]-hydrogen + (sulfur carrier)-SH + AH2 + 2 S-adenosyl-L-methionine = 3-methylsulfanyl-L-aspartate(89)-[ribosomal protein uS12]-hydrogen + (sulfur carrier)-H + 5'-deoxyadenosine + L-methionine + A + S-adenosyl-L-homocysteine + 2 H(+). Catalyzes the methylthiolation of an aspartic acid residue of ribosomal protein uS12. This Helicobacter acinonychis (strain Sheeba) protein is Ribosomal protein uS12 methylthiotransferase RimO.